Here is a 203-residue protein sequence, read N- to C-terminus: Ribosomal RNA small subunit methyltransferase G (203 aa).

Residues Gly-75, Leu-80, 126–127 (VE), and Arg-141 each bind S-adenosyl-L-methionine.

This sequence belongs to the methyltransferase superfamily. RNA methyltransferase RsmG family.

The protein localises to the cytoplasm. The catalysed reaction is guanosine(527) in 16S rRNA + S-adenosyl-L-methionine = N(7)-methylguanosine(527) in 16S rRNA + S-adenosyl-L-homocysteine. Functionally, specifically methylates the N7 position of guanine in position 527 of 16S rRNA. This is Ribosomal RNA small subunit methyltransferase G from Ruthia magnifica subsp. Calyptogena magnifica.